The sequence spans 202 residues: NAD(P)H-quinone oxidoreductase chain 6 (202 aa).

A run of 5 helical transmembrane segments spans residues Val9–Ala29, Ile32–Leu52, Ala61–Val81, Val98–Thr118, and Phe144–Ile164.

Belongs to the complex I subunit 6 family.

It is found in the membrane. The catalysed reaction is a plastoquinone + NADH + (n+1) H(+)(in) = a plastoquinol + NAD(+) + n H(+)(out). It catalyses the reaction a plastoquinone + NADPH + (n+1) H(+)(in) = a plastoquinol + NADP(+) + n H(+)(out). NDH-1 shuttles electrons from NAD(P)H, via FMN and iron-sulfur (Fe-S) centers, to quinones in the respiratory chain. The immediate electron acceptor for the enzyme in this species is believed to be plastoquinone. Couples the redox reaction to proton translocation (for every two electrons transferred, four hydrogen ions are translocated across the cytoplasmic membrane), and thus conserves the redox energy in a proton gradient. This chain is NAD(P)H-quinone oxidoreductase chain 6 (ndhG), found in Nostoc sp. (strain PCC 7120 / SAG 25.82 / UTEX 2576).